The following is a 377-amino-acid chain: 4-hydroxy-3-methylbut-2-en-1-yl diphosphate synthase (flavodoxin) (377 aa).

[4Fe-4S] cluster is bound by residues Cys-270, Cys-273, Cys-305, and Glu-312.

It belongs to the IspG family. Requires [4Fe-4S] cluster as cofactor.

The catalysed reaction is (2E)-4-hydroxy-3-methylbut-2-enyl diphosphate + oxidized [flavodoxin] + H2O + 2 H(+) = 2-C-methyl-D-erythritol 2,4-cyclic diphosphate + reduced [flavodoxin]. It participates in isoprenoid biosynthesis; isopentenyl diphosphate biosynthesis via DXP pathway; isopentenyl diphosphate from 1-deoxy-D-xylulose 5-phosphate: step 5/6. In terms of biological role, converts 2C-methyl-D-erythritol 2,4-cyclodiphosphate (ME-2,4cPP) into 1-hydroxy-2-methyl-2-(E)-butenyl 4-diphosphate. This chain is 4-hydroxy-3-methylbut-2-en-1-yl diphosphate synthase (flavodoxin), found in Bacillus subtilis (strain 168).